A 254-amino-acid chain; its full sequence is MLKILVSNDDGVMAKGIQTLAKALRQRYDVQIVAPDRNRSAASNSLTIDRPLRKQRHENGDIAIVEGTPTDCVYLGVNHLVRPRPDIVVSGINHGPNLGDDVLYSGTVAAATEGRFLGLPAIAVSLDGETHFDTAAQVTCDVLAMLQRVPLRAGNILNINVPDIPLAEIKGFRITRCGSRHASQHVYTQTDPKGNTLYWIGPPGEKNDVGPDTDFAAVDAGYVSITPLHVDSTAYKALELLKDWLNKAEVEKTC.

A divalent metal cation-binding residues include Asp9, Asp10, Ser40, and Asn93.

This sequence belongs to the SurE nucleotidase family. A divalent metal cation is required as a cofactor.

It is found in the cytoplasm. The catalysed reaction is a ribonucleoside 5'-phosphate + H2O = a ribonucleoside + phosphate. It carries out the reaction a ribonucleoside 3'-phosphate + H2O = a ribonucleoside + phosphate. It catalyses the reaction [phosphate](n) + H2O = [phosphate](n-1) + phosphate + H(+). In terms of biological role, nucleotidase with a broad substrate specificity as it can dephosphorylate various ribo- and deoxyribonucleoside 5'-monophosphates and ribonucleoside 3'-monophosphates with highest affinity to 3'-AMP. Also hydrolyzes polyphosphate (exopolyphosphatase activity) with the preference for short-chain-length substrates (P20-25). Might be involved in the regulation of dNTP and NTP pools, and in the turnover of 3'-mononucleotides produced by numerous intracellular RNases (T1, T2, and F) during the degradation of various RNAs. In Proteus mirabilis (strain HI4320), this protein is 5'/3'-nucleotidase SurE.